A 309-amino-acid polypeptide reads, in one-letter code: HPr kinase/phosphorylase (309 aa).

Catalysis depends on residues His-138 and Lys-159. 153 to 160 (GQSGVGKS) serves as a coordination point for ATP. Position 160 (Ser-160) interacts with Mg(2+). Asp-177 (proton acceptor; for phosphorylation activity. Proton donor; for dephosphorylation activity) is an active-site residue. Positions 201 to 210 (LEIRGLGIIN) are important for the catalytic mechanism of both phosphorylation and dephosphorylation. Glu-202 provides a ligand contact to Mg(2+). Arg-243 is a catalytic residue. Residues 264–269 (PVRPGR) are important for the catalytic mechanism of dephosphorylation.

It belongs to the HPrK/P family. In terms of assembly, homohexamer. It depends on Mg(2+) as a cofactor.

The catalysed reaction is [HPr protein]-L-serine + ATP = [HPr protein]-O-phospho-L-serine + ADP + H(+). It carries out the reaction [HPr protein]-O-phospho-L-serine + phosphate + H(+) = [HPr protein]-L-serine + diphosphate. Functionally, catalyzes the ATP- as well as the pyrophosphate-dependent phosphorylation of a specific serine residue in HPr, a phosphocarrier protein of the phosphoenolpyruvate-dependent sugar phosphotransferase system (PTS). HprK/P also catalyzes the pyrophosphate-producing, inorganic phosphate-dependent dephosphorylation (phosphorolysis) of seryl-phosphorylated HPr (P-Ser-HPr). The two antagonistic activities of HprK/P are regulated by several intracellular metabolites, which change their concentration in response to the absence or presence of rapidly metabolisable carbon sources (glucose, fructose, etc.) in the growth medium. Also phosphorylates/dephosphorylates the HPr-like catabolite repression protein crh on a specific serine residue. Therefore, by controlling the phosphorylation state of HPr and crh, HPrK/P is a sensor enzyme that plays a major role in the regulation of carbon metabolism and sugar transport: it mediates carbon catabolite repression (CCR), and regulates PTS-catalyzed carbohydrate uptake and inducer exclusion. The sequence is that of HPr kinase/phosphorylase from Bacillus anthracis (strain A0248).